We begin with the raw amino-acid sequence, 173 residues long: Peptidoglycan-associated lipoprotein (173 aa).

The first 21 residues, 1–21 (MQLNKVLKGLMIALPVMAIAA), serve as a signal peptide directing secretion. C22 carries the N-palmitoyl cysteine lipid modification. C22 carries the S-diacylglycerol cysteine lipid modification. Residues 30-58 (NDGSEGMLGAGTGMDANGGNGNMSSEEQA) are disordered. Over residues 35 to 50 (GMLGAGTGMDANGGNG) the composition is skewed to gly residues. Residues 60 to 173 (LQMQQLQQNN…SKNRRAVLVY (114 aa)) form the OmpA-like domain.

This sequence belongs to the Pal lipoprotein family. As to quaternary structure, the Tol-Pal system is composed of five core proteins: the inner membrane proteins TolA, TolQ and TolR, the periplasmic protein TolB and the outer membrane protein Pal. They form a network linking the inner and outer membranes and the peptidoglycan layer.

Its subcellular location is the cell outer membrane. Its function is as follows. Part of the Tol-Pal system, which plays a role in outer membrane invagination during cell division and is important for maintaining outer membrane integrity. The protein is Peptidoglycan-associated lipoprotein of Escherichia coli O157:H7.